The following is a 115-amino-acid chain: NAD(P)H-quinone oxidoreductase subunit M (115 aa).

Belongs to the complex I NdhM subunit family. NDH-1 can be composed of about 15 different subunits; different subcomplexes with different compositions have been identified which probably have different functions.

The protein resides in the cellular thylakoid membrane. The catalysed reaction is a plastoquinone + NADH + (n+1) H(+)(in) = a plastoquinol + NAD(+) + n H(+)(out). It catalyses the reaction a plastoquinone + NADPH + (n+1) H(+)(in) = a plastoquinol + NADP(+) + n H(+)(out). Its function is as follows. NDH-1 shuttles electrons from an unknown electron donor, via FMN and iron-sulfur (Fe-S) centers, to quinones in the respiratory and/or the photosynthetic chain. The immediate electron acceptor for the enzyme in this species is believed to be plastoquinone. Couples the redox reaction to proton translocation, and thus conserves the redox energy in a proton gradient. Cyanobacterial NDH-1 also plays a role in inorganic carbon-concentration. The chain is NAD(P)H-quinone oxidoreductase subunit M from Trichodesmium erythraeum (strain IMS101).